The sequence spans 886 residues: Interference hedgehog (886 aa).

The signal sequence occupies residues 1-20 (MTLLTSSLLLFSLLTSRLEA). The Extracellular segment spans residues 21–709 (IPVLEKSPAH…ETFNMSPMLT (689 aa)). The segment covering 29–38 (AHPAHSAHPA) has biased composition (low complexity). Positions 29-52 (AHPAHSAHPAHPAHPAHPAHPSPG) are disordered. Ig-like C2-type domains follow at residues 51–148 (PGVR…IARL), 138–238 (PLVV…ERIQ), 258–346 (PHLL…YIKV), and 352–438 (PQIV…LQVN). Cystine bridges form between Cys-74/Cys-132, Cys-179/Cys-226, Cys-282/Cys-330, and Cys-373/Cys-420. 2 N-linked (GlcNAc...) asparagine glycosylation sites follow: Asn-108 and Asn-215. The interval 432–475 (GTLLQVNPKQIQEPRESGGTHRPKPNQGSRQKQMYPPTPPNVTR) is disordered. 2 Fibronectin type-III domains span residues 467–573 (PPTP…LQPG) and 581–676 (VPEL…TQRP). The N-linked (GlcNAc...) asparagine glycan is linked to Asn-472. Heparin-binding residues include Arg-503, Lys-507, Lys-509, and Arg-547. An N-linked (GlcNAc...) asparagine glycan is attached at Asn-563. A disordered region spans residues 668–697 (LKQGRTQRPKTSTTEEPTLQMGDRDTTTPS). The span at 671–684 (GRTQRPKTSTTEEP) shows a compositional bias: polar residues. Asn-699 carries N-linked (GlcNAc...) asparagine glycosylation. Residues 710–730 (GTIGGGAVLILLLISTCFCVC) form a helical membrane-spanning segment. The Cytoplasmic portion of the chain corresponds to 731–886 (RRRNSRSRGN…SSGSLNSVGV (156 aa)). Disordered regions lie at residues 734-768 (NSRSRGNNPNKPRMAELRDDFVPLGNCSPTKQRQR) and 781-886 (QQQQ…SVGV). Composition is skewed to low complexity over residues 829-843 (RAGGSNGSNNGNNNN) and 870-886 (SSRSENLSSGSLNSVGV).

This sequence belongs to the immunoglobulin superfamily. IHOG family. As to quaternary structure, homodimer. Heterotetramer; 2 iHog chains bind 2 hh chains when facilitated by heparin, heparin is required to promote high-affinity interactions between hh and iHog.

The protein localises to the membrane. In terms of biological role, mediates response to the active Hedgehog (Hh) protein signal in embryos, functioning upstream or at the level of patched (ptc). In Drosophila melanogaster (Fruit fly), this protein is Interference hedgehog (ihog).